A 369-amino-acid chain; its full sequence is Anhydro-N-acetylmuramic acid kinase (369 aa).

An ATP-binding site is contributed by 12–19; the sequence is GTSLDGVD.

Belongs to the anhydro-N-acetylmuramic acid kinase family.

The catalysed reaction is 1,6-anhydro-N-acetyl-beta-muramate + ATP + H2O = N-acetyl-D-muramate 6-phosphate + ADP + H(+). The protein operates within amino-sugar metabolism; 1,6-anhydro-N-acetylmuramate degradation. It participates in cell wall biogenesis; peptidoglycan recycling. Its function is as follows. Catalyzes the specific phosphorylation of 1,6-anhydro-N-acetylmuramic acid (anhMurNAc) with the simultaneous cleavage of the 1,6-anhydro ring, generating MurNAc-6-P. Is required for the utilization of anhMurNAc either imported from the medium or derived from its own cell wall murein, and thus plays a role in cell wall recycling. This is Anhydro-N-acetylmuramic acid kinase from Escherichia coli O7:K1 (strain IAI39 / ExPEC).